Reading from the N-terminus, the 559-residue chain is uncharacterized protein (559 aa).

The next 11 membrane-spanning stretches (helical) occupy residues 103–123 (LAALIAGNVFIAMPMTLNGLF), 139–159 (FGYYFNTLIILLRFIAGLFYY), 192–212 (AGITSDFLISYFVYWVISFPF), 223–243 (FFLIKSISTYIACFAMLIFLL), 263–283 (WSWVFMCALNSSVAGFSTLAV), 302–322 (MLILPLVAAVSAPIGIVSGVA), 348–368 (AAAFFMGLTYLVSMIAQNISD), 387–407 (IRRAQVIVIIIGAWAIVPWKI), 413–434 (AFLAFLGSLSIFLGPAAGIFVA), 466–486 (ALIAFLCACVPLIPGMAMSIN), and 501–521 (IGYFYSFMTAFLIYWGLNLVF).

It belongs to the purine-cytosine permease (2.A.39) family.

It localises to the golgi apparatus membrane. This is an uncharacterized protein from Schizosaccharomyces pombe (strain 972 / ATCC 24843) (Fission yeast).